The sequence spans 182 residues: Small ribosomal subunit protein uS4c (182 aa).

Residues 13-32 form a disordered region; it reads GLTSKRPRSGSDLKNPLRSG. The 62-residue stretch at 82-143 folds into the S4 RNA-binding domain; it reads MRLDNILFRL…KQRSKALIQN (62 aa).

It belongs to the universal ribosomal protein uS4 family. In terms of assembly, part of the 30S ribosomal subunit. Contacts protein S5. The interaction surface between S4 and S5 is involved in control of translational fidelity.

Its subcellular location is the plastid. The protein resides in the chloroplast. One of the primary rRNA binding proteins, it binds directly to 16S rRNA where it nucleates assembly of the body of the 30S subunit. Functionally, with S5 and S12 plays an important role in translational accuracy. The protein is Small ribosomal subunit protein uS4c (rps4) of Scadoxus puniceus (Paintbrush lily).